The following is a 753-amino-acid chain: Replication restart protein PriA (753 aa).

Positions 228–395 (SLVAEQFQTC…LSKKYTLSVL (168 aa)) constitute a Helicase ATP-binding domain. 241-248 (GVTGSGKT) contacts ATP. The short motif at 337-340 (DEEH) is the DEAH box element. Residues Cys-458, Cys-461, Cys-467, Cys-470, Cys-485, Cys-488, Cys-499, and Cys-502 each coordinate Zn(2+). The 156-residue stretch at 491–646 (RLSKPITSCP…DFPAFYKEEI (156 aa)) folds into the Helicase C-terminal domain.

This sequence belongs to the helicase family. PriA subfamily. As to quaternary structure, component of the replication restart primosome. Zn(2+) serves as cofactor.

The enzyme catalyses Couples ATP hydrolysis with the unwinding of duplex DNA by translocating in the 3'-5' direction.. It catalyses the reaction ATP + H2O = ADP + phosphate + H(+). Its function is as follows. Initiates the restart of stalled replication forks, which reloads the replicative helicase on sites other than the origin of replication. Recognizes and binds to abandoned replication forks and remodels them to uncover a helicase loading site. Promotes assembly of the primosome at these replication forks. The sequence is that of Replication restart protein PriA from Chlamydia trachomatis serovar D (strain ATCC VR-885 / DSM 19411 / UW-3/Cx).